The primary structure comprises 160 residues: V-type proton ATPase subunit c (160 aa).

The Vacuolar portion of the chain corresponds to 1–8; sequence MTELCPVY. The helical transmembrane segment at 9 to 31 threads the bilayer; that stretch reads APFFGAIGCASAIIFTSLGAAYG. Residues 32-53 are Cytoplasmic-facing; sequence TAKSGVGICATCVLRPDLLFKN. The helical transmembrane segment at 54 to 74 threads the bilayer; sequence IVPVIMAGIIAIYGLVVSVLV. The Vacuolar portion of the chain corresponds to 75–90; that stretch reads CYSLGQKQALYTGFIQ. Residues 91-112 traverse the membrane as a helical segment; sequence LGAGLSVGLSGLAAGFAIGIVG. Residues 113 to 124 are Cytoplasmic-facing; it reads DAGVRGSSQQPR. Residues 125–150 traverse the membrane as a helical segment; the sequence is LFVGMILILIFAEVLGLYGLIVALLL. The Vacuolar segment spans residues 151-160; it reads NSRATQDVVC.

This sequence belongs to the V-ATPase proteolipid subunit family. V-ATPase is a heteromultimeric enzyme composed of a peripheral catalytic V1 complex (components A to H) attached to an integral membrane V0 proton pore complex (components: a, c, c', c'', d, e, f and VOA1). The decameric c-ring forms the proton-conducting pore, and is composed of eight proteolipid subunits c, one subunit c' and one subunit c''.

It is found in the vacuole membrane. In terms of biological role, proton-conducting pore forming subunit of the V0 complex of vacuolar(H+)-ATPase (V-ATPase), a multisubunit enzyme composed of a peripheral complex (V1) that hydrolyzes ATP and a membrane integral complex (V0) that translocates protons. V-ATPase is responsible for acidifying and maintaining the pH of intracellular compartments. The sequence is that of V-type proton ATPase subunit c (VMA3) from Saccharomyces cerevisiae (strain ATCC 204508 / S288c) (Baker's yeast).